Reading from the N-terminus, the 294-residue chain is N-acetylmuramic acid 6-phosphate etherase (294 aa).

The SIS domain occupies 54-217 (VIKSFEEEGR…STASMIGVGK (164 aa)). E82 serves as the catalytic Proton donor. The active site involves E113.

This sequence belongs to the GCKR-like family. MurNAc-6-P etherase subfamily. As to quaternary structure, homodimer.

The catalysed reaction is N-acetyl-D-muramate 6-phosphate + H2O = N-acetyl-D-glucosamine 6-phosphate + (R)-lactate. It participates in amino-sugar metabolism; N-acetylmuramate degradation. Specifically catalyzes the cleavage of the D-lactyl ether substituent of MurNAc 6-phosphate, producing GlcNAc 6-phosphate and D-lactate. This chain is N-acetylmuramic acid 6-phosphate etherase, found in Bacillus cereus (strain ATCC 10987 / NRS 248).